Reading from the N-terminus, the 358-residue chain is Protein ocs (358 aa).

It belongs to the lysopine/nopaline/octopine/opine/vitopine dehydrogenases family.

It carries out the reaction D-octopine + NAD(+) + H2O = L-arginine + pyruvate + NADH + H(+). It catalyses the reaction D-lysopine + NADP(+) + H2O = L-lysine + pyruvate + NADPH + H(+). In terms of biological role, reductive condensation of pyruvate and arginine, lysine, histidine, or octopine to form octopine, lysopine, histopine, or octopinic acid, respectively. NADPH is the preferred cofactor, but NADH can also be used. This Agrobacterium vitis (Rhizobium vitis) protein is Protein ocs (ocs).